A 156-amino-acid polypeptide reads, in one-letter code: ATP synthase subunit b (156 aa).

A helical membrane pass occupies residues 11-31 (LIAFALFVWFCMKFVWPPIIN).

The protein belongs to the ATPase B chain family. F-type ATPases have 2 components, F(1) - the catalytic core - and F(0) - the membrane proton channel. F(1) has five subunits: alpha(3), beta(3), gamma(1), delta(1), epsilon(1). F(0) has three main subunits: a(1), b(2) and c(10-14). The alpha and beta chains form an alternating ring which encloses part of the gamma chain. F(1) is attached to F(0) by a central stalk formed by the gamma and epsilon chains, while a peripheral stalk is formed by the delta and b chains.

It localises to the cell inner membrane. In terms of biological role, f(1)F(0) ATP synthase produces ATP from ADP in the presence of a proton or sodium gradient. F-type ATPases consist of two structural domains, F(1) containing the extramembraneous catalytic core and F(0) containing the membrane proton channel, linked together by a central stalk and a peripheral stalk. During catalysis, ATP synthesis in the catalytic domain of F(1) is coupled via a rotary mechanism of the central stalk subunits to proton translocation. Its function is as follows. Component of the F(0) channel, it forms part of the peripheral stalk, linking F(1) to F(0). The sequence is that of ATP synthase subunit b from Haemophilus influenzae (strain PittGG).